We begin with the raw amino-acid sequence, 469 residues long: Ribulose bisphosphate carboxylase large chain (469 aa).

Lysine 5 is modified (N6,N6,N6-trimethyllysine). Positions 114 and 164 each coordinate substrate. The active-site Proton acceptor is lysine 166. Residue lysine 168 coordinates substrate. The Mg(2+) site is built by lysine 192, aspartate 194, and glutamate 195. Lysine 192 is subject to N6-carboxylysine. Histidine 285 (proton acceptor) is an active-site residue. Positions 286, 318, and 370 each coordinate substrate.

This sequence belongs to the RuBisCO large chain family. Type I subfamily. Heterohexadecamer of 8 large chains and 8 small chains; disulfide-linked. The disulfide link is formed within the large subunit homodimers. Mg(2+) is required as a cofactor. Post-translationally, the disulfide bond which can form in the large chain dimeric partners within the hexadecamer appears to be associated with oxidative stress and protein turnover.

Its subcellular location is the plastid. It is found in the chloroplast. It carries out the reaction 2 (2R)-3-phosphoglycerate + 2 H(+) = D-ribulose 1,5-bisphosphate + CO2 + H2O. The catalysed reaction is D-ribulose 1,5-bisphosphate + O2 = 2-phosphoglycolate + (2R)-3-phosphoglycerate + 2 H(+). RuBisCO catalyzes two reactions: the carboxylation of D-ribulose 1,5-bisphosphate, the primary event in carbon dioxide fixation, as well as the oxidative fragmentation of the pentose substrate in the photorespiration process. Both reactions occur simultaneously and in competition at the same active site. The polypeptide is Ribulose bisphosphate carboxylase large chain (Calycophyllum candidissimum (Degame lemonwood tree)).